The sequence spans 294 residues: Ribosomal protein L11 methyltransferase (294 aa).

Residues Thr-144, Gly-165, Asp-187, and Asn-229 each coordinate S-adenosyl-L-methionine.

This sequence belongs to the methyltransferase superfamily. PrmA family.

It is found in the cytoplasm. It carries out the reaction L-lysyl-[protein] + 3 S-adenosyl-L-methionine = N(6),N(6),N(6)-trimethyl-L-lysyl-[protein] + 3 S-adenosyl-L-homocysteine + 3 H(+). Its function is as follows. Methylates ribosomal protein L11. The chain is Ribosomal protein L11 methyltransferase from Cellvibrio japonicus (strain Ueda107) (Pseudomonas fluorescens subsp. cellulosa).